Reading from the N-terminus, the 697-residue chain is Phenylalanine--tRNA ligase beta subunit, chloroplastic (697 aa).

The 86-residue stretch at Asn283–Ser368 folds into the B5 domain. Mg(2+) contacts are provided by Asp346, Asp352, Glu355, and Glu356. The FDX-ACB domain maps to Ser609 to Leu697.

It belongs to the phenylalanyl-tRNA synthetase beta subunit family. Type 1 subfamily. As to quaternary structure, tetramer of two alpha and two beta subunits. It depends on Mg(2+) as a cofactor.

Its subcellular location is the plastid. It localises to the chloroplast. The catalysed reaction is tRNA(Phe) + L-phenylalanine + ATP = L-phenylalanyl-tRNA(Phe) + AMP + diphosphate + H(+). The sequence is that of Phenylalanine--tRNA ligase beta subunit, chloroplastic from Gracilaria tenuistipitata var. liui (Red alga).